The following is a 115-amino-acid chain: Parathyroid hormone (115 aa).

The signal sequence occupies residues 1 to 25 (MMSASTMAKVMILMLAVCLLTQADG). Residues 26–31 (KPVKKR) constitute a propeptide that is removed on maturation. The segment at 51–69 (RMQWLRKKLQDVHNFVSLG) is important for receptor binding. A disordered region spans residues 76-101 (EGSYQRPTKKEENVLVDGNSKSLGEG).

This sequence belongs to the parathyroid hormone family. In terms of assembly, interacts with PTH1R (via N-terminal extracellular domain). In terms of tissue distribution, hypothalamus and parathyroid gland.

The protein resides in the secreted. Functionally, parathyroid hormone elevates calcium level by dissolving the salts in bone and preventing their renal excretion. Acts by binding to its receptor, PTH1R, activating G protein-coupled receptor signaling. Stimulates [1-14C]-2-deoxy-D-glucose (2DG) transport and glycogen synthesis in osteoblastic cells. The polypeptide is Parathyroid hormone (Pth) (Rattus norvegicus (Rat)).